The following is a 518-amino-acid chain: Integrator complex subunit 14 (518 aa).

In terms of domain architecture, VWFA spans 2–204 (PTVVVMDVSL…KNVQSMFGKL (203 aa)). Residues Ser-10, Ser-12, and Thr-86 each contribute to the Mg(2+) site.

The protein belongs to the Integrator subunit 14 family. As to quaternary structure, component of the Integrator complex, composed of core subunits INTS1, INTS2, INTS3, INTS4, INTS5, INTS6, INTS7, INTS8, INTS9/RC74, INTS10, INTS11/CPSF3L, INTS12, INTS13, INTS14 and INTS15. The core complex associates with protein phosphatase 2A subunits PPP2CA and PPP2R1A, to form the Integrator-PP2A (INTAC) complex. INTS14 is part of the tail subcomplex, composed of INTS10, INTS13, INTS14 and INTS15.

It localises to the nucleus. In terms of biological role, component of the integrator complex, a multiprotein complex that terminates RNA polymerase II (Pol II) transcription in the promoter-proximal region of genes. The integrator complex provides a quality checkpoint during transcription elongation by driving premature transcription termination of transcripts that are unfavorably configured for transcriptional elongation: the complex terminates transcription by (1) catalyzing dephosphorylation of the C-terminal domain (CTD) of Pol II subunit POLR2A/RPB1 and SUPT5H/SPT5, (2) degrading the exiting nascent RNA transcript via endonuclease activity and (3) promoting the release of Pol II from bound DNA. The integrator complex is also involved in terminating the synthesis of non-coding Pol II transcripts, such as enhancer RNAs (eRNAs), small nuclear RNAs (snRNAs), telomerase RNAs and long non-coding RNAs (lncRNAs). Within the integrator complex, INTS14 is part of the integrator tail module that acts as a platform for the recruitment of transcription factors at promoters. This chain is Integrator complex subunit 14, found in Xenopus tropicalis (Western clawed frog).